The primary structure comprises 534 residues: CTP synthase (534 aa).

Residues 1 to 266 (MKTKFLFITG…DERIIDYLNI (266 aa)) are amidoligase domain. Ser14 contributes to the CTP binding site. Position 14 (Ser14) interacts with UTP. ATP-binding positions include 15-20 (SLGKGL) and Asp72. Residues Asp72 and Glu140 each coordinate Mg(2+). Residues 147-149 (DIE), 187-192 (KTKPTQ), and Lys223 contribute to the CTP site. Residues 187–192 (KTKPTQ) and Lys223 each bind UTP. 239-241 (RDV) contacts ATP. Positions 291 to 533 (TIAIVGKYVE…VGASLKHHGE (243 aa)) constitute a Glutamine amidotransferase type-1 domain. Residue Gly353 participates in L-glutamine binding. Cys380 acts as the Nucleophile; for glutamine hydrolysis in catalysis. Residues 381-384 (LGMQ), Glu404, and Arg461 each bind L-glutamine. Residues His506 and Glu508 contribute to the active site.

Belongs to the CTP synthase family. As to quaternary structure, homotetramer.

It carries out the reaction UTP + L-glutamine + ATP + H2O = CTP + L-glutamate + ADP + phosphate + 2 H(+). It catalyses the reaction L-glutamine + H2O = L-glutamate + NH4(+). The enzyme catalyses UTP + NH4(+) + ATP = CTP + ADP + phosphate + 2 H(+). The protein operates within pyrimidine metabolism; CTP biosynthesis via de novo pathway; CTP from UDP: step 2/2. With respect to regulation, allosterically activated by GTP, when glutamine is the substrate; GTP has no effect on the reaction when ammonia is the substrate. The allosteric effector GTP functions by stabilizing the protein conformation that binds the tetrahedral intermediate(s) formed during glutamine hydrolysis. Inhibited by the product CTP, via allosteric rather than competitive inhibition. Catalyzes the ATP-dependent amination of UTP to CTP with either L-glutamine or ammonia as the source of nitrogen. Regulates intracellular CTP levels through interactions with the four ribonucleotide triphosphates. The protein is CTP synthase of Syntrophotalea carbinolica (strain DSM 2380 / NBRC 103641 / GraBd1) (Pelobacter carbinolicus).